The following is a 138-amino-acid chain: Large ribosomal subunit protein uL16 (138 aa).

The segment covering 1-19 has biased composition (basic residues); that stretch reads MLIPRKVAHRKQHHPKRTG. Residues 1–22 form a disordered region; sequence MLIPRKVAHRKQHHPKRTGAAK.

Belongs to the universal ribosomal protein uL16 family. In terms of assembly, part of the 50S ribosomal subunit.

In terms of biological role, binds 23S rRNA and is also seen to make contacts with the A and possibly P site tRNAs. This is Large ribosomal subunit protein uL16 from Parafrankia sp. (strain EAN1pec).